The primary structure comprises 284 residues: MKDSLQTIGVFVRPTHYQNPLFEKLEQAKEWVLKLLEDEGFESFMIDSLDGAKDARLIEKADAFLCLGGDGTILGALRMTHSYNKPCFGVRIGNLGFLSAVELNGLKDFLQDFKQDRIKLEEHLALEGRIGKTSFYAINEIVIAKKKALGVLDIKAYAGHTPFNTYKGDGLIIATPLGSTAYNLSAHGPIVHALSQSYILTPLCDFSLTQRPLVLGAEFCLNFCAHEDALVVIDGQATYDLKANQPLYIQKSPTTTKLLQKNSRDYFKVLKEKLLWGESPSKKR.

D70 functions as the Proton acceptor in the catalytic mechanism. Residues 70 to 71, 139 to 140, K167, D169, L177, 180 to 185, and Q236 contribute to the NAD(+) site; these read DG, NE, and TAYNLS.

It belongs to the NAD kinase family. Requires a divalent metal cation as cofactor.

The protein resides in the cytoplasm. The enzyme catalyses NAD(+) + ATP = ADP + NADP(+) + H(+). Its function is as follows. Involved in the regulation of the intracellular balance of NAD and NADP, and is a key enzyme in the biosynthesis of NADP. Catalyzes specifically the phosphorylation on 2'-hydroxyl of the adenosine moiety of NAD to yield NADP. This Helicobacter pylori (strain ATCC 700392 / 26695) (Campylobacter pylori) protein is NAD kinase.